Consider the following 156-residue polypeptide: Small ribosomal subunit protein uS7 (156 aa).

It belongs to the universal ribosomal protein uS7 family. As to quaternary structure, part of the 30S ribosomal subunit. Contacts proteins S9 and S11.

Functionally, one of the primary rRNA binding proteins, it binds directly to 16S rRNA where it nucleates assembly of the head domain of the 30S subunit. Is located at the subunit interface close to the decoding center, probably blocks exit of the E-site tRNA. This chain is Small ribosomal subunit protein uS7, found in Yersinia enterocolitica serotype O:8 / biotype 1B (strain NCTC 13174 / 8081).